We begin with the raw amino-acid sequence, 213 residues long: Small ribosomal subunit protein uS5 (213 aa).

One can recognise an S5 DRBM domain in the interval 54 to 117 (LKSETVDVRL…RNAKLNIIPV (64 aa)).

It belongs to the universal ribosomal protein uS5 family. Part of the 30S ribosomal subunit. Contacts protein S4.

Functionally, with S4 and S12 plays an important role in translational accuracy. The sequence is that of Small ribosomal subunit protein uS5 from Hyperthermus butylicus (strain DSM 5456 / JCM 9403 / PLM1-5).